The sequence spans 376 residues: Succinyl-diaminopimelate desuccinylase (376 aa).

Histidine 66 contacts Zn(2+). Residue aspartate 68 is part of the active site. Aspartate 99 serves as a coordination point for Zn(2+). Glutamate 133 (proton acceptor) is an active-site residue. Zn(2+) contacts are provided by glutamate 134, glutamate 162, and histidine 349.

This sequence belongs to the peptidase M20A family. DapE subfamily. Homodimer. Zn(2+) is required as a cofactor. Co(2+) serves as cofactor.

It carries out the reaction N-succinyl-(2S,6S)-2,6-diaminopimelate + H2O = (2S,6S)-2,6-diaminopimelate + succinate. Its pathway is amino-acid biosynthesis; L-lysine biosynthesis via DAP pathway; LL-2,6-diaminopimelate from (S)-tetrahydrodipicolinate (succinylase route): step 3/3. In terms of biological role, catalyzes the hydrolysis of N-succinyl-L,L-diaminopimelic acid (SDAP), forming succinate and LL-2,6-diaminopimelate (DAP), an intermediate involved in the bacterial biosynthesis of lysine and meso-diaminopimelic acid, an essential component of bacterial cell walls. In Buchnera aphidicola subsp. Cinara cedri (strain Cc), this protein is Succinyl-diaminopimelate desuccinylase.